Reading from the N-terminus, the 163-residue chain is Ubiquitin-like protein 1-ribosomal protein eS31 fusion protein (163 aa).

Residues 1-70 (MVFVKTLHRT…IYVNLELLGG (70 aa)) enclose the Ubiquitin-like domain. Gly-70 is covalently cross-linked (Glycyl lysine isopeptide (Gly-Lys) (interchain with K-? in acceptor proteins)). The C4-type zinc-finger motif lies at 115–138 (CQQPSCGGGVFMAQHANRHYCGRC).

This sequence in the N-terminal section; belongs to the ubiquitin family. The protein in the C-terminal section; belongs to the eukaryotic ribosomal protein eS31 family.

This is Ubiquitin-like protein 1-ribosomal protein eS31 fusion protein from Caenorhabditis elegans.